Reading from the N-terminus, the 597-residue chain is Phragmoplastin interacting protein 1 (597 aa).

The tract at residues 18-136 (ESLSVSVSET…KTPKKAEEGN (119 aa)) is disordered. The span at 20 to 29 (LSVSVSETNP) shows a compositional bias: polar residues. Residues 30-40 (QSQSLKLLLDS) show a composition bias toward low complexity. Composition is skewed to basic residues over residues 43-53 (HKPRLSKREKR) and 112-129 (QKKKNKKKKKKRKVNKTP). Residues 112-119 (QKKKNKKK) carry the Nuclear localization signal motif. RRM domains lie at 161–238 (NKLY…QYVK) and 262–338 (NRVY…CALK). 3 CCHC-type zinc fingers span residues 397–411 (CYECGEKGHLSTACP), 481–495 (CYECGEKGHLSTACP), and 576–591 (CYECGEKGHLSSACPN).

As to quaternary structure, interacts with phragmoplastins (e.g. DRP1A, DRP1B, DRP1C, DRP1D and DRP1E) and with GTP-bound ARAC11/ROP1 as well as with Ran2 transcripts.

The protein resides in the nucleus. It localises to the cell membrane. The protein localises to the cytoplasm. It is found in the cytoskeleton. Its subcellular location is the phragmoplast. Functionally, RNA-binding protein which mediates polarized mRNA (e.g. Ran2 transcripts mRNA) transport from the nucleus to the vicinity of the cell plate during cytokinesis and phragmoplast formation. The chain is Phragmoplastin interacting protein 1 from Arabidopsis thaliana (Mouse-ear cress).